We begin with the raw amino-acid sequence, 108 residues long: uncharacterized protein (108 aa).

The protein belongs to the UPF0440 family.

This is an uncharacterized protein from Thermococcus kodakarensis (strain ATCC BAA-918 / JCM 12380 / KOD1) (Pyrococcus kodakaraensis (strain KOD1)).